The sequence spans 247 residues: Uridylate kinase (247 aa).

Residue 18-21 participates in ATP binding; that stretch reads KLSG. Gly-60 provides a ligand contact to UMP. 2 residues coordinate ATP: Gly-61 and Arg-65. UMP is bound by residues Asp-80 and 141–148; that span reads TGNPFFTT. Residues Thr-168, Tyr-174, and Asp-177 each coordinate ATP.

This sequence belongs to the UMP kinase family. Homohexamer.

The protein resides in the cytoplasm. It catalyses the reaction UMP + ATP = UDP + ADP. It functions in the pathway pyrimidine metabolism; CTP biosynthesis via de novo pathway; UDP from UMP (UMPK route): step 1/1. With respect to regulation, inhibited by UTP. Its function is as follows. Catalyzes the reversible phosphorylation of UMP to UDP. The chain is Uridylate kinase from Stutzerimonas stutzeri (strain A1501) (Pseudomonas stutzeri).